The primary structure comprises 632 residues: MQPGEGYHYDSGPNNAVHPHQLPAGSRLNQYLANNNRQGPSFGPGTPINVNAPVFVPKHQQPQPAQVAAPPPMVNQFAQLSIHDVPHQMIPFGQINGPPTFGPGQHMNHRASHHHQSPQMAQQPPTLQQSAYDRYQLENRGGTTYFYTEPTEAGPDDEQYTEAEAPDGSILVNTPGAFGYNAPLPISHMARFRGKANANLQTQFISPEIRMELINRQLAYDTKADSAIIGDIPHSVEHFSNLVPLEIAGIQSQTTYKAFSCRDGNYYCLRRIHGNRIQHPGKQTHLVEQWKKLVHGNVVPLREVLINCRAFDDSSLIFAYDYYPLAGTLMEKHFDTKSGTFFDPNNGFRISSPMNVSMPISGTGAHETLIWSYIIQIAAALRAIHSSGLACRTLDLNKIITYGNKIMISFCGIQDVLDPDPTTIQQQQNEDLNMFGNLIVALATGRANGWRKDLYQQLKKFIEDTYSMDLRNVIGFLHNNSTRKTINEIMPMIGGRFFTVMENMQAKTDVLEAELSREMENGRLFRLVAKMNTVLERVEHGTDDAWSETGDRFMLKLFRDYVFHQVTDQGKAWLDMAHIVQCLNKLDCGSQEKIEMVSRSGDTQIIIDYATLKRCLDKSFRDLLGTNMMLHR.

Disordered regions lie at residues 1-22 and 99-127; these read MQPG…PHQL and PTFG…PPTL. The span at 107 to 116 shows a compositional bias: basic residues; sequence MNHRASHHHQ. The segment covering 117-127 has biased composition (polar residues); it reads SPQMAQQPPTL. The segment at 223–494 is pseudokinase domain; that stretch reads KADSAIIGDI…TINEIMPMIG (272 aa). Residues Arg270, 321–328, and 397–398 contribute to the ATP site; these read DYYPLAGT and NK. A coiled-coil region spans residues 495–533; the sequence is GRFFTVMENMQAKTDVLEAELSREMENGRLFRLVAKMNT. The segment at 534 to 632 is knob domain; sequence VLERVEHGTD…LLGTNMMLHR (99 aa).

It belongs to the protein kinase superfamily. PAN3 family. Homodimer. Forms a heterotrimer with a catalytic subunit PAN2 to form the poly(A)-nuclease (PAN) deadenylation complex. Interacts (via PAM-2 motif) with poly(A)-binding protein (via PABC domain), conferring substrate specificity of the enzyme complex. Interacts with the GW182 family protein ain-1. As to expression, highly expressed in germ cells.

Its subcellular location is the cytoplasm. It localises to the P-body. Its function is as follows. Regulatory subunit of the poly(A)-nuclease (PAN) deadenylation complex, one of two cytoplasmic mRNA deadenylases involved in general and miRNA-mediated mRNA turnover. PAN specifically shortens poly(A) tails of RNA and the activity is stimulated by poly(A)-binding protein (PABP). PAN deadenylation is followed by rapid degradation of the shortened mRNA tails by the CCR4-NOT complex. Deadenylated mRNAs are then degraded by two alternative mechanisms, namely exosome-mediated 3'-5' exonucleolytic degradation, or deadenylation-dependent mRNA decaping and subsequent 5'-3' exonucleolytic degradation by XRN1. PAN3 acts as a positive regulator for PAN activity, recruiting the catalytic subunit PAN2 to mRNA via its interaction with RNA and PABP, and to miRNA targets via its interaction with GW182 family proteins. Within the PAN complex, may positively regulate fertility. The sequence is that of PAN2-PAN3 deadenylation complex subunit PAN3 from Caenorhabditis elegans.